The sequence spans 466 residues: Glucose-6-phosphate 1-dehydrogenase 1 (466 aa).

Residues S48, 88-89 (DV), and K141 each bind NADP(+). The substrate site is built by H171, K175, E209, and D228. H233 (proton acceptor) is an active-site residue. Substrate-binding residues include K319 and K324.

It belongs to the glucose-6-phosphate dehydrogenase family.

It carries out the reaction D-glucose 6-phosphate + NADP(+) = 6-phospho-D-glucono-1,5-lactone + NADPH + H(+). The protein operates within carbohydrate degradation; pentose phosphate pathway; D-ribulose 5-phosphate from D-glucose 6-phosphate (oxidative stage): step 1/3. Catalyzes the oxidation of glucose 6-phosphate to 6-phosphogluconolactone. This is Glucose-6-phosphate 1-dehydrogenase 1 from Mycobacterium tuberculosis (strain CDC 1551 / Oshkosh).